The following is a 135-amino-acid chain: 30 kDa antigenic glycoprotein (135 aa).

Residues 1–5 form the signal peptide; that stretch reads GNTYS. Residues Asn22, Asn31, Asn57, and Asn73 are each glycosylated (N-linked (GlcNAc...) asparagine).

To H.contortus 15 kDa excretory/secretory protein.

It localises to the secreted. The chain is 30 kDa antigenic glycoprotein from Trichostrongylus colubriformis (Black scour worm).